The following is a 102-amino-acid chain: NADH-quinone oxidoreductase subunit K (102 aa).

A run of 3 helical transmembrane segments spans residues 5–25 (LEHYLTVAAILFTLGIFGIFL), 31–51 (IVILMSIELMLLAVNINLVAF), and 66–86 (FVLTVAAAEAAIGLAILVVFF).

It belongs to the complex I subunit 4L family. NDH-1 is composed of 14 different subunits. Subunits NuoA, H, J, K, L, M, N constitute the membrane sector of the complex.

It is found in the cell inner membrane. The enzyme catalyses a quinone + NADH + 5 H(+)(in) = a quinol + NAD(+) + 4 H(+)(out). NDH-1 shuttles electrons from NADH, via FMN and iron-sulfur (Fe-S) centers, to quinones in the respiratory chain. The immediate electron acceptor for the enzyme in this species is believed to be ubiquinone. Couples the redox reaction to proton translocation (for every two electrons transferred, four hydrogen ions are translocated across the cytoplasmic membrane), and thus conserves the redox energy in a proton gradient. In Parvibaculum lavamentivorans (strain DS-1 / DSM 13023 / NCIMB 13966), this protein is NADH-quinone oxidoreductase subunit K.